The primary structure comprises 429 residues: MKKSINLRSLAAQAIEQVVEKGQSLSTVLPPLQHKVSDKDKALLQELCFGVLRTLSQLEWLINKLMSRPMTGKQRTIHYLIMVGLYQLLYTRIPPHAALAETVEGAVAIKRMQFKGLINGVLRQFQRQQDELLAEFSGQDARWLHPMWLLNRFQTAWPREWQAVVEANNERPPMWLRVNRQHHSRDEWLKLLEENGMTGHIHPRYPDAVRLDAPAPVSALPGFEQGWVTVQDASAQGCVELLAPQNGETILDLCAAPGGKTTHILEAAPQASVMAVDVDAQRISRVYENLKRLKMKADVKVGDGRFPSTWCGETQFDRILLDAPCSATGVIRRHPDIKWLRRDSDINELAQLQSEILDAIWPHLKPGGTLLYATCSVLPEENSEQIRAFLSRTPDAQLDGTGSTQTPGIQNLPGATEGDGFFYAKLIKK.

S-adenosyl-L-methionine-binding positions include 254 to 260 (CAAPGGK), aspartate 277, aspartate 303, and aspartate 322. The Nucleophile role is filled by cysteine 375.

It belongs to the class I-like SAM-binding methyltransferase superfamily. RsmB/NOP family.

The protein resides in the cytoplasm. It catalyses the reaction cytidine(967) in 16S rRNA + S-adenosyl-L-methionine = 5-methylcytidine(967) in 16S rRNA + S-adenosyl-L-homocysteine + H(+). In terms of biological role, specifically methylates the cytosine at position 967 (m5C967) of 16S rRNA. This Cronobacter sakazakii (strain ATCC BAA-894) (Enterobacter sakazakii) protein is Ribosomal RNA small subunit methyltransferase B.